The following is a 472-amino-acid chain: MEFRQAYYDEPLIKDIKSDTSFKLSEDVDENLLPQDMRRTDLKLPQVSEVDVVRHYTRLSQMNYTVDVGIYPLGSCTMKYNPKYADRIASFAEFRNIHPFQPESTVQGTLQIMYELQEFLKKISDMDAVTLQPMAGADGEFTGILIIKKYFEDLHEDRTEIIVPDSAHGTNPASATMGGFDVVEIPSNSEGMVDLNALKAAISKKTAALMITNPNTLGIFEQNITEIAKILHDAGALLYYDGANLNAIFGITSPGLMGFDIVHFNLHKSFATPHGGGGPGAGPVAVKSFLSDFLPVPVVGYDGKRYFLDYGKKKSIGRVSSFYGSFSILLRAWSYVIRNGDDGLKNATIRAVLNSNYLKKKVEGYYEVPYYPLKKHEFVLSTEKTGRRALDIGKYLLDFGIHSPTVYFPLIVKEAMMIEPTETVSKDDLDRYADVLISALKVPEDDLKSRPRNTAVSRIDEVKAARDLKVRW.

Position 268 is an N6-(pyridoxal phosphate)lysine (lysine 268).

It belongs to the GcvP family. C-terminal subunit subfamily. As to quaternary structure, the glycine cleavage system is composed of four proteins: P, T, L and H. In this organism, the P 'protein' is a heterodimer of two subunits. It depends on pyridoxal 5'-phosphate as a cofactor.

It catalyses the reaction N(6)-[(R)-lipoyl]-L-lysyl-[glycine-cleavage complex H protein] + glycine + H(+) = N(6)-[(R)-S(8)-aminomethyldihydrolipoyl]-L-lysyl-[glycine-cleavage complex H protein] + CO2. Its function is as follows. The glycine cleavage system catalyzes the degradation of glycine. The P protein binds the alpha-amino group of glycine through its pyridoxal phosphate cofactor; CO(2) is released and the remaining methylamine moiety is then transferred to the lipoamide cofactor of the H protein. This is Probable glycine dehydrogenase (decarboxylating) subunit 2 from Thermoplasma acidophilum (strain ATCC 25905 / DSM 1728 / JCM 9062 / NBRC 15155 / AMRC-C165).